The chain runs to 706 residues: 1,4-alpha-glucan-branching enzyme (706 aa).

(1,4-alpha-D-glucosyl)n contacts are provided by Trp-96 and Lys-133. Asp-358 serves as the catalytic Nucleophile. Glu-419 (proton donor) is an active-site residue.

The protein belongs to the glycosyl hydrolase 13 family. GlgB subfamily. As to quaternary structure, monomer.

The protein localises to the cytoplasm. It carries out the reaction Transfers a segment of a (1-&gt;4)-alpha-D-glucan chain to a primary hydroxy group in a similar glucan chain.. Its pathway is glycan biosynthesis; glycogen biosynthesis. In terms of biological role, glycogen-branching enzyme participates in the glycogen biosynthetic process along with glycogenin and glycogen synthase. Generates alpha-1,6-glucosidic branches from alpha-1,4-linked glucose chains, to increase solubility of the glycogen polymer. In Candida glabrata (strain ATCC 2001 / BCRC 20586 / JCM 3761 / NBRC 0622 / NRRL Y-65 / CBS 138) (Yeast), this protein is 1,4-alpha-glucan-branching enzyme (GLC3).